Reading from the N-terminus, the 437-residue chain is Phosphomethylpyrimidine synthase (437 aa).

Substrate-binding positions include asparagine 69, methionine 98, tyrosine 127, histidine 163, 185–187, 226–229, and glutamate 265; these read SRG and DACR. Histidine 269 is a binding site for Zn(2+). Tyrosine 292 provides a ligand contact to substrate. Histidine 333 lines the Zn(2+) pocket. Cysteine 409, cysteine 412, and cysteine 416 together coordinate [4Fe-4S] cluster.

This sequence belongs to the ThiC family. Requires [4Fe-4S] cluster as cofactor.

The enzyme catalyses 5-amino-1-(5-phospho-beta-D-ribosyl)imidazole + S-adenosyl-L-methionine = 4-amino-2-methyl-5-(phosphooxymethyl)pyrimidine + CO + 5'-deoxyadenosine + formate + L-methionine + 3 H(+). Its pathway is cofactor biosynthesis; thiamine diphosphate biosynthesis. Functionally, catalyzes the synthesis of the hydroxymethylpyrimidine phosphate (HMP-P) moiety of thiamine from aminoimidazole ribotide (AIR) in a radical S-adenosyl-L-methionine (SAM)-dependent reaction. This Clostridium botulinum (strain Loch Maree / Type A3) protein is Phosphomethylpyrimidine synthase.